Reading from the N-terminus, the 443-residue chain is Cobyrinate a,c-diamide synthase (443 aa).

The region spanning 244 to 435 (KVSVAMDSAF…AHIHFLSNPR (192 aa)) is the GATase cobBQ-type domain. C327 serves as the catalytic Nucleophile.

This sequence belongs to the CobB/CbiA family. Mg(2+) serves as cofactor.

It carries out the reaction cob(II)yrinate + 2 L-glutamine + 2 ATP + 2 H2O = cob(II)yrinate a,c diamide + 2 L-glutamate + 2 ADP + 2 phosphate + 2 H(+). Its pathway is cofactor biosynthesis; adenosylcobalamin biosynthesis; cob(II)yrinate a,c-diamide from sirohydrochlorin (anaerobic route): step 10/10. Functionally, catalyzes the ATP-dependent amidation of the two carboxylate groups at positions a and c of cobyrinate, using either L-glutamine or ammonia as the nitrogen source. In Thermoplasma acidophilum (strain ATCC 25905 / DSM 1728 / JCM 9062 / NBRC 15155 / AMRC-C165), this protein is Cobyrinate a,c-diamide synthase.